The primary structure comprises 391 residues: Ferrochelatase (391 aa).

Fe cation is bound by residues His-196 and Glu-281.

Belongs to the ferrochelatase family.

The protein resides in the cytoplasm. It carries out the reaction heme b + 2 H(+) = protoporphyrin IX + Fe(2+). It functions in the pathway porphyrin-containing compound metabolism; protoheme biosynthesis; protoheme from protoporphyrin-IX: step 1/1. Functionally, catalyzes the ferrous insertion into protoporphyrin IX. This chain is Ferrochelatase, found in Prochlorococcus marinus (strain SARG / CCMP1375 / SS120).